A 148-amino-acid polypeptide reads, in one-letter code: Glutamyl-tRNA(Gln) amidotransferase subunit C, mitochondrial (148 aa).

The protein belongs to the GatC family. Subunit of the heterotrimeric GatCAB amidotransferase (AdT) complex, composed of A, B and C subunits.

It is found in the mitochondrion. It carries out the reaction L-glutamyl-tRNA(Gln) + L-glutamine + ATP + H2O = L-glutaminyl-tRNA(Gln) + L-glutamate + ADP + phosphate + H(+). Allows the formation of correctly charged Gln-tRNA(Gln) through the transamidation of misacylated Glu-tRNA(Gln) in the mitochondria. The reaction takes place in the presence of glutamine and ATP through an activated gamma-phospho-Glu-tRNA(Gln). In Drosophila melanogaster (Fruit fly), this protein is Glutamyl-tRNA(Gln) amidotransferase subunit C, mitochondrial.